We begin with the raw amino-acid sequence, 505 residues long: Glutamate--tRNA ligase (505 aa).

A 'HIGH' region motif is present at residues 12 to 22; it reads PSPTGALHIGG. Residues 260 to 264 carry the 'KMSKS' region motif; the sequence is KLSKR. Lysine 263 is an ATP binding site.

Belongs to the class-I aminoacyl-tRNA synthetase family. Glutamate--tRNA ligase type 1 subfamily. Monomer.

The protein resides in the cytoplasm. It catalyses the reaction tRNA(Glu) + L-glutamate + ATP = L-glutamyl-tRNA(Glu) + AMP + diphosphate. Functionally, catalyzes the attachment of glutamate to tRNA(Glu) in a two-step reaction: glutamate is first activated by ATP to form Glu-AMP and then transferred to the acceptor end of tRNA(Glu). This chain is Glutamate--tRNA ligase, found in Bacteroides fragilis (strain ATCC 25285 / DSM 2151 / CCUG 4856 / JCM 11019 / LMG 10263 / NCTC 9343 / Onslow / VPI 2553 / EN-2).